The following is a 37-amino-acid chain: Omega/M-ectatotoxin-Et1a subunit A (37 aa).

Cysteine 12 and cysteine 34 form a disulfide bridge.

Belongs to the ectatomin family. Ectatomin-Et subfamily. Heterodimer of an A and a B chain; disulfide-linked. Expressed by the venom gland.

The protein resides in the secreted. Its subcellular location is the target cell membrane. Functionally, algogenic for animals, human and insects. At high concentrations (0.5-1 uM), it acts as a pore-forming protein that forms nonselective cation channels both in cell and artificial membranes. It is weakly selective for cation over anions channel conductance is identical in both directions. At lower concentrations (1-10 nM), this heterodimer inhibits cardiac L-type calcium currents in isolated rat cardiac ventricular myocytes. The polypeptide is Omega/M-ectatotoxin-Et1a subunit A (Ectatomma tuberculatum (Selva ant)).